The primary structure comprises 372 residues: Sulfate/thiosulfate import ATP-binding protein CysA (372 aa).

Residues 3–237 (IQVQHVTKRF…PATPFVYGFL (235 aa)) form the ABC transporter domain. ATP is bound at residue 35–42 (GPSGCGKT).

The protein belongs to the ABC transporter superfamily. Sulfate/tungstate importer (TC 3.A.1.6) family. The complex is composed of two ATP-binding proteins (CysA), two transmembrane proteins (CysT and CysW) and a solute-binding protein (CysP).

It localises to the cell inner membrane. The catalysed reaction is sulfate(out) + ATP + H2O = sulfate(in) + ADP + phosphate + H(+). It catalyses the reaction thiosulfate(out) + ATP + H2O = thiosulfate(in) + ADP + phosphate + H(+). Its function is as follows. Part of the ABC transporter complex CysAWTP involved in sulfate/thiosulfate import. Responsible for energy coupling to the transport system. This chain is Sulfate/thiosulfate import ATP-binding protein CysA, found in Ralstonia nicotianae (strain ATCC BAA-1114 / GMI1000) (Ralstonia solanacearum).